A 256-amino-acid chain; its full sequence is uncharacterized protein (256 aa).

This is an uncharacterized protein from Saccharomyces cerevisiae (strain ATCC 204508 / S288c) (Baker's yeast).